The following is a 217-amino-acid chain: Flagellar L-ring protein 1 (217 aa).

The N-terminal stretch at 1-16 (MTLARLAPLAALLLAA) is a signal peptide. C17 carries N-palmitoyl cysteine lipidation. The S-diacylglycerol cysteine moiety is linked to residue C17.

This sequence belongs to the FlgH family. In terms of assembly, the basal body constitutes a major portion of the flagellar organelle and consists of four rings (L,P,S, and M) mounted on a central rod.

The protein resides in the cell outer membrane. It localises to the bacterial flagellum basal body. Its function is as follows. Assembles around the rod to form the L-ring and probably protects the motor/basal body from shearing forces during rotation. This chain is Flagellar L-ring protein 1, found in Chromobacterium violaceum (strain ATCC 12472 / DSM 30191 / JCM 1249 / CCUG 213 / NBRC 12614 / NCIMB 9131 / NCTC 9757 / MK).